The chain runs to 128 residues: MDTIANLITSIRNAYIVDKKIVRVTATRTNENIGRILLQEGFIKSIREHKDGQKSFLIFTLKYRKKKEKRITLKRISKPGRKIYSDFPNMPKVLGGMGIAIVSTSRGIMTDREARQKKIGGEILCYVW.

The protein belongs to the universal ribosomal protein uS8 family. As to quaternary structure, part of the 30S ribosomal subunit.

Its subcellular location is the plastid. The protein resides in the chloroplast. Its function is as follows. One of the primary rRNA binding proteins, it binds directly to 16S rRNA central domain where it helps coordinate assembly of the platform of the 30S subunit. The sequence is that of Small ribosomal subunit protein uS8c (rps8) from Welwitschia mirabilis (Tree tumbo).